We begin with the raw amino-acid sequence, 301 residues long: Glycine--tRNA ligase alpha subunit (301 aa).

This sequence belongs to the class-II aminoacyl-tRNA synthetase family. In terms of assembly, tetramer of two alpha and two beta subunits.

Its subcellular location is the cytoplasm. The catalysed reaction is tRNA(Gly) + glycine + ATP = glycyl-tRNA(Gly) + AMP + diphosphate. This is Glycine--tRNA ligase alpha subunit from Shewanella amazonensis (strain ATCC BAA-1098 / SB2B).